The chain runs to 396 residues: MAKAKFERTKPHVNIGTIGHVDHGKTTLTAAITKVLAGKGQAEFKAFDQIDNAPEERERGITIATAHVEYETDKRHYAHVDCPGHADYVKNMITGAAQMDGAILVVSAADGPMPQTREHILLARQVGVPYIVVYLNKADMVDDEELLELVELEIRELLSSYDFPGDDIPIVKGSALKALEGEKSELGEDSIIKLMDAVDSYIPDPERAVDKPFLMPVEDVFSISGRGTVATGRVERGIVKVGEEVEIVGIKATAKTTVTGVEMFRKLLDEGRAGDNIGALLRGIKREEIERGQVLAKPGSITPHTKFKAEAYILNKEEGGRHTPFFNGYRPQFYFRTTDVTGIVDLPAGTEMVMPGDNVAVTVNLITPIAMDEGLRFAIREGGRTVGAGVVSSIIE.

The region spanning 10-206 (KPHVNIGTIG…AVDSYIPDPE (197 aa)) is the tr-type G domain. The interval 19 to 26 (GHVDHGKT) is G1. 19–26 (GHVDHGKT) is a binding site for GTP. Mg(2+) is bound at residue Thr-26. The tract at residues 60-64 (GITIA) is G2. Residues 81 to 84 (DCPG) are G3. GTP is bound by residues 81–85 (DCPGH) and 136–139 (NKAD). Residues 136-139 (NKAD) form a G4 region. Residues 174–176 (SAL) form a G5 region.

The protein belongs to the TRAFAC class translation factor GTPase superfamily. Classic translation factor GTPase family. EF-Tu/EF-1A subfamily. As to quaternary structure, monomer.

The protein resides in the cytoplasm. The enzyme catalyses GTP + H2O = GDP + phosphate + H(+). Functionally, GTP hydrolase that promotes the GTP-dependent binding of aminoacyl-tRNA to the A-site of ribosomes during protein biosynthesis. The polypeptide is Elongation factor Tu (Pelobacter propionicus (strain DSM 2379 / NBRC 103807 / OttBd1)).